The chain runs to 151 residues: Transcriptional regulator MraZ (151 aa).

SpoVT-AbrB domains lie at 5–51 and 81–124; these read AHEL…PVAE and AEIL…GREQ.

The protein belongs to the MraZ family. Forms oligomers.

It is found in the cytoplasm. It localises to the nucleoid. The chain is Transcriptional regulator MraZ from Neisseria gonorrhoeae (strain ATCC 700825 / FA 1090).